The primary structure comprises 901 residues: Nuclear factor of activated T-cells, cytoplasmic 4 (901 aa).

Disordered stretches follow at residues 15-179 (LVFG…LSSW) and 203-362 (NEAA…EDSV). Over residues 61-81 (IPRPPPPRPGMHSPPPRPAPS) the composition is skewed to pro residues. Residues 96 to 109 (GGPGGNAGGAGGGR) are compositionally biased toward gly residues. Residues 114–119 (PSIRIT) are calcineurin-binding. Residues 114 to 123 (PSIRITSISP) are compositionally biased toward low complexity. The span at 151-165 (GFGGYREAGGQGGGA) shows a compositional bias: gly residues. The segment covering 166–179 (FFSPSPGSSSLSSW) has biased composition (low complexity). 2 positions are modified to phosphoserine; by MAPK7 and MAPK14: serine 168 and serine 170. Phosphoserine; by MAPK8 and MAPK9 is present on residues serine 213 and serine 217. One copy of the SP 1 repeat lies at 213-229 (SPLPSPRASPRPWTPED). The tract at residues 213 to 293 (SPLPSPRASP…LSRRGSLGEE (81 aa)) is 2 approximate SP repeats. Composition is skewed to pro residues over residues 215-227 (LPSPRASPRPWTP) and 254-263 (GPVPASPRPA). A Nuclear localization signal motif is present at residues 268–270 (KRR). A compositionally biased stretch (low complexity) spans 272–288 (SSSGTPSSASPALSRRG). One copy of the SP 2; approximate repeat lies at 277-293 (PSSASPALSRRGSLGEE). A Phosphoserine modification is found at serine 289. Phosphoserine; by RPS6KA3 is present on serine 334. Serine 344 is modified (phosphoserine). An RHD domain is found at 401–582 (SALPPLDWPL…VPIECSQRSA (182 aa)). A DNA-binding region spans residues 430–437 (RAHYETEG). Residues 586–683 (PQVETYSPSA…KRSPTQSFKF (98 aa)) enclose the IPT/TIG domain. The Nuclear localization signal motif lies at 672-674 (RRK). Residue lysine 689 forms a Glycyl lysine isopeptide (Lys-Gly) (interchain with G-Cter in SUMO2) linkage. 2 disordered regions span residues 695–721 (DSSLRGFPSTSGPPFGPDVDFSPPRPP) and 827–869 (PQSA…FRDS).

Member of the multicomponent NFATC transcription complex that consists of at least two components, a pre-existing cytoplasmic component NFATC2 and an inducible nuclear component NFATC1. Other NFAT proteins, such as NFATC3, or members of the activating protein-1 (AP-1) family and MAF can also bind the complex. NFAT proteins can bind DNA as monomers or dimers. Component of a promoter-binding complex composed of STAT3, NFATC3 and NFATC4; complex formation is enhanced by calcineurin. Interacts with CREBBP; this interaction potentiates transcription activation. Interacts with MAPK8/JNK1 and MAPK9/JNK2. Interacts with GATA4 (via the second Zn finger). Interacts (via N-terminus) with IRAK1 (via C-terminus). Interacts with RPS6KA3. Interacts with HOMER1, HOMER2 and HOMER3; this interaction competes with calcineurin/PPP3CA-binding and hence prevents NFATC4 dephosphorylation and activation. Interacts with ESR1 and ESR2; this interaction decreases NFATC4 transcriptional activity. Interacts with MTOR and MAPK7/ERK5. Interacts with TRIM17; this interaction prevents NFATC3 nuclear localization. Interacts with TCF25 (via C-terminus); the interaction leads to suppression of NFATC4 transcription factor activity and is reduced following stimulation with angiotensin-2. Post-translationally, phosphorylated by NFATC-kinases; dephosphorylated by calcineurin/PPP3CA. Phosphorylated on Ser-168 and Ser-170 by MTOR, IRAK1, MAPK7/ERK5 and MAPK14/p38, on Ser-213 and Ser-217 by MAPK8 and MAPK9, and on Ser-289 and Ser-344 by RPS6KA3. Phosphorylated by GSK3B. Phosphorylation by GSK3B markedly increases NFATC4 ubiquitination. Phosphorylation by MAPK8/JNK1, MAPK9/JNK2 and RPS6KA3 may stimulate NFATC4 transcriptional activity. Phosphorylation at Ser-168 and Ser-170 is stimulated by UV irradiation. Ubiquitinated, leading to degradation by the proteasome. Ubiquitination may be stimulated by GSK3B-dependent phosphorylation. Polyubiquitin linkage mainly occurs through 'Lys-48'. In terms of tissue distribution, widely expressed. In the brain, expressed in neurons. Expressed in the hippocampus (at protein level). In the hippocampus, expressed in both the CA1-CA3 pyramidal cells and the dentate gyrus granular cells. Expressed in a subset of hippocampal cells representing adult-born neurons (at protein level). Expressed in the submandibular gland (at protein level). In the olfactory system, expressed at low levels in the glomerular and granular layers and in the mitral cell layer. In the cerebellum, expressed at moderate levels in granular neurons. Expressed at moderate levels in the choroid plexus and ependymal cells. Expressed in neurons of the cochlear nucleus (at protein level). Expressed at low levels in the heart (at protein level). Expressed in ventricular cardiomyocytes (at protein level). Expressed in the lung.

The protein resides in the cytoplasm. The protein localises to the nucleus. In terms of biological role, ca(2+)-regulated transcription factor that is involved in several processes, including the development and function of the immune, cardiovascular, musculoskeletal, and nervous systems. Involved in T-cell activation, stimulating the transcription of cytokine genes, including that of IL2 and IL4. Following JAK/STAT signaling activation and as part of a complex with NFATC3 and STAT3, binds to the alpha-beta E4 promoter region of CRYAB and activates transcription in cardiomyocytes. Along with NFATC3, involved in embryonic heart development. Involved in mitochondrial energy metabolism required for cardiac morphogenesis and function. Transactivates many genes involved in heart physiology. Along with GATA4, binds to and activates NPPB/BNP promoter. Activates NPPA/ANP/ANF and MYH7/beta-MHC transcription. Binds to and transactivates AGTR2 gene promoter. Involved in the regulation of adult hippocampal neurogenesis. Involved in BDNF-driven pro-survival signaling in hippocampal adult-born neurons. Involved in the formation of long-term spatial memory and long-term potentiation. In cochlear nucleus neurons, may play a role in deafferentation-induced apoptosis during a developmental critical period when auditory neurons depend on afferent input for survival. Binds to and activates the BACE1/Beta-secretase 1 promoter, hence may regulate the proteolytic processing of the amyloid precursor protein (APP). Plays a role in adipocyte differentiation. May be involved in myoblast differentiation into myotubes. Binds the consensus DNA sequence 5'-GGAAAAT-3'. In the presence of CREBBP, activates TNF transcription. Binds to PPARG gene promoter and regulates its activity. Binds to PPARG and REG3G gene promoters. This chain is Nuclear factor of activated T-cells, cytoplasmic 4, found in Mus musculus (Mouse).